The sequence spans 249 residues: Ubiquinone biosynthesis O-methyltransferase (249 aa).

S-adenosyl-L-methionine-binding residues include Arg41, Gly72, Asp93, and Met136.

Belongs to the methyltransferase superfamily. UbiG/COQ3 family.

The catalysed reaction is a 3-demethylubiquinol + S-adenosyl-L-methionine = a ubiquinol + S-adenosyl-L-homocysteine + H(+). It catalyses the reaction a 3-(all-trans-polyprenyl)benzene-1,2-diol + S-adenosyl-L-methionine = a 2-methoxy-6-(all-trans-polyprenyl)phenol + S-adenosyl-L-homocysteine + H(+). It functions in the pathway cofactor biosynthesis; ubiquinone biosynthesis. In terms of biological role, O-methyltransferase that catalyzes the 2 O-methylation steps in the ubiquinone biosynthetic pathway. This chain is Ubiquinone biosynthesis O-methyltransferase, found in Methylobacterium nodulans (strain LMG 21967 / CNCM I-2342 / ORS 2060).